The chain runs to 243 residues: DNA repair protein RecO (243 aa).

The protein belongs to the RecO family.

In terms of biological role, involved in DNA repair and RecF pathway recombination. The sequence is that of DNA repair protein RecO from Chlamydia trachomatis serovar L2 (strain ATCC VR-902B / DSM 19102 / 434/Bu).